Consider the following 302-residue polypeptide: 2-phosphoglycerate kinase (302 aa).

The region spanning 2–89 (IKVIERDGKV…FWRRFRKLKI (88 aa)) is the ATP-cone domain.

It belongs to the 2-phosphoglycerate kinase family. A divalent metal cation serves as cofactor.

It carries out the reaction (2R)-2-phosphoglycerate + ATP = (2R)-2,3-bisphosphoglycerate + ADP + H(+). It participates in thermoadapter biosynthesis; cyclic 2,3-diphosphoglycerate biosynthesis; cyclic 2,3-diphosphoglycerate from 2-phospho-D-glycerate: step 1/2. In terms of biological role, catalyzes the phosphorylation of 2-phosphoglycerate to 2,3-diphosphoglycerate. Involved in the biosynthesis of cyclic 2,3-bisphosphoglycerate, a thermoprotectant. The protein is 2-phosphoglycerate kinase of Pyrococcus furiosus (strain ATCC 43587 / DSM 3638 / JCM 8422 / Vc1).